The primary structure comprises 121 residues: Small ribosomal subunit protein uS13 (121 aa).

Positions 92 to 121 (KRGLPVRGQRTRTNARTRKGPRRAAASLKK) are disordered.

The protein belongs to the universal ribosomal protein uS13 family. Part of the 30S ribosomal subunit. Forms a loose heterodimer with protein S19. Forms two bridges to the 50S subunit in the 70S ribosome.

Its function is as follows. Located at the top of the head of the 30S subunit, it contacts several helices of the 16S rRNA. In the 70S ribosome it contacts the 23S rRNA (bridge B1a) and protein L5 of the 50S subunit (bridge B1b), connecting the 2 subunits; these bridges are implicated in subunit movement. Contacts the tRNAs in the A and P-sites. This chain is Small ribosomal subunit protein uS13, found in Bordetella bronchiseptica (strain ATCC BAA-588 / NCTC 13252 / RB50) (Alcaligenes bronchisepticus).